The chain runs to 221 residues: Urease accessory protein UreF (221 aa).

It belongs to the UreF family. As to quaternary structure, ureD, UreF and UreG form a complex that acts as a GTP-hydrolysis-dependent molecular chaperone, activating the urease apoprotein by helping to assemble the nickel containing metallocenter of UreC. The UreE protein probably delivers the nickel.

It localises to the cytoplasm. Required for maturation of urease via the functional incorporation of the urease nickel metallocenter. The sequence is that of Urease accessory protein UreF from Aliivibrio fischeri (strain MJ11) (Vibrio fischeri).